We begin with the raw amino-acid sequence, 75 residues long: Small ribosomal subunit protein bS18 (75 aa).

It belongs to the bacterial ribosomal protein bS18 family. In terms of assembly, part of the 30S ribosomal subunit. Forms a tight heterodimer with protein bS6.

In terms of biological role, binds as a heterodimer with protein bS6 to the central domain of the 16S rRNA, where it helps stabilize the platform of the 30S subunit. This Pseudoalteromonas translucida (strain TAC 125) protein is Small ribosomal subunit protein bS18.